Here is a 132-residue protein sequence, read N- to C-terminus: Putative apolipoprotein(a)-like protein 2 (132 aa).

A signal peptide spans 1–21 (MEHKEVVLLLLLFLKSAPTET). Residues 27-105 (ECYHSNGQSY…RWEYCNLTRC (79 aa)) form the Kringle domain. 3 cysteine pairs are disulfide-bonded: Cys-28/Cys-105, Cys-49/Cys-88, and Cys-77/Cys-100. The N-linked (GlcNAc...) asparagine glycan is linked to Asn-101.

In terms of tissue distribution, expressed in liver but not in other tissues tested.

The protein resides in the secreted. This chain is Putative apolipoprotein(a)-like protein 2 (LPAL2), found in Homo sapiens (Human).